Consider the following 195-residue polypeptide: Small ribosomal subunit protein uS5 (195 aa).

The disordered stretch occupies residues 1 to 20; sequence MAREREGGGRGRREDREERD. Residues 23 to 86 form the S5 DRBM domain; that stretch reads FVDKLVHINR…EAAKRGLIRV (64 aa). The interval 161-195 is disordered; it reads DSPRSVAARRGIKVSTLQSRRRDADPADQSEAAVA.

Belongs to the universal ribosomal protein uS5 family. As to quaternary structure, part of the 30S ribosomal subunit. Contacts proteins S4 and S8.

In terms of biological role, with S4 and S12 plays an important role in translational accuracy. Its function is as follows. Located at the back of the 30S subunit body where it stabilizes the conformation of the head with respect to the body. The sequence is that of Small ribosomal subunit protein uS5 from Methylobacterium radiotolerans (strain ATCC 27329 / DSM 1819 / JCM 2831 / NBRC 15690 / NCIMB 10815 / 0-1).